Reading from the N-terminus, the 825-residue chain is ATP-dependent RNA helicase DBP7 (825 aa).

Residues 21 to 125 (IKFTGGRWRE…AEPALPSNAP (105 aa)) are disordered. A compositionally biased stretch (low complexity) spans 49-60 (DAVADDVGPAPA). The span at 83–102 (GPRSQHVSSRLFTSNPTPVT) shows a compositional bias: polar residues. Positions 109–125 (TAPAEEPAEPALPSNAP) are enriched in low complexity. The Q motif motif lies at 131 to 160 (ATFAALGLSRRIAQHLSAKLELKAPTAIQH). The Helicase ATP-binding domain maps to 164 to 373 (PHLVTTDEDA…GEYSLEADKT (210 aa)). 177 to 184 (AQTGSGKT) contributes to the ATP binding site. Residues 302 to 305 (DEGD) carry the DEAD box motif. Positions 400–625 (QLKQSYLVVP…QLYDSVLQAG (226 aa)) constitute a Helicase C-terminal domain. Disordered regions lie at residues 457–495 (EPKEAAAPPTPKKAPKDAGETPDTPPKETKPTKPVTNHT), 632–657 (LPPVTATNEDGQDTEQQKQLDSRKQT), 676–713 (SDASSQASNNSGKGFNSKKGASTKLGKPAPKSSDGATG), and 764–825 (IGAG…FNIG). Basic and acidic residues-rich tracts occupy residues 470-487 (APKDAGETPDTPPKETKP) and 646-655 (EQQKQLDSRK). Residues 676-686 (SDASSQASNNS) show a composition bias toward low complexity. The segment covering 786–796 (TKGDDGDGLDK) has biased composition (basic and acidic residues).

This sequence belongs to the DEAD box helicase family. DDX31/DBP7 subfamily.

It is found in the nucleus. The protein resides in the nucleolus. The catalysed reaction is ATP + H2O = ADP + phosphate + H(+). In terms of biological role, ATP-binding RNA helicase involved in the biogenesis of 60S ribosomal subunits and is required for the normal formation of 25S and 5.8S rRNAs. The polypeptide is ATP-dependent RNA helicase DBP7 (DBP7) (Pyricularia oryzae (strain 70-15 / ATCC MYA-4617 / FGSC 8958) (Rice blast fungus)).